The sequence spans 980 residues: Protein translocase subunit SecA (980 aa).

Residues Gln-109, 127–131 (GEGKT), and Asp-529 each bind ATP. The disordered stretch occupies residues 954 to 980 (QKIGRNDPCPCGSGKKYKHCHGKDNPQ). The Zn(2+) site is built by Cys-962, Cys-964, Cys-973, and His-974.

It belongs to the SecA family. In terms of assembly, monomer and homodimer. Part of the essential Sec protein translocation apparatus which comprises SecA, SecYEG and auxiliary proteins SecDF. Other proteins may also be involved. The cofactor is Zn(2+).

It is found in the cell inner membrane. The protein localises to the cytoplasm. It catalyses the reaction ATP + H2O + cellular proteinSide 1 = ADP + phosphate + cellular proteinSide 2.. Part of the Sec protein translocase complex. Interacts with the SecYEG preprotein conducting channel. Has a central role in coupling the hydrolysis of ATP to the transfer of proteins into and across the cell membrane, serving as an ATP-driven molecular motor driving the stepwise translocation of polypeptide chains across the membrane. The sequence is that of Protein translocase subunit SecA from Brachyspira hyodysenteriae (strain ATCC 49526 / WA1).